The following is a 250-amino-acid chain: Maleate isomerase (250 aa).

Substrate contacts are provided by residues Asn-15, 80–82, Tyr-137, and Asn-167; that span reads CLV. The active-site Nucleophile is Cys-80. Cys-80 is subject to S-(2-succinyl)cysteine. Cys-198 functions as the Proton donor in the catalytic mechanism. 199 to 200 is a binding site for substrate; the sequence is VQ.

Belongs to the maleate isomerase family. In terms of assembly, homodimer.

It catalyses the reaction maleate = fumarate. The protein operates within cofactor degradation; nicotinate degradation. Catalyzes cis-trans isomerization of the C2-C3 double bond in maleate to yield fumarate in the aerobic nicotinate degradation pathway. This Pseudomonas putida (strain ATCC 47054 / DSM 6125 / CFBP 8728 / NCIMB 11950 / KT2440) protein is Maleate isomerase.